A 214-amino-acid chain; its full sequence is Ribonuclease HII (214 aa).

Positions 27–214 (SVVAGIDEAG…SPIKQMCAIV (188 aa)) constitute an RNase H type-2 domain. Residues D33, E34, and D126 each contribute to the a divalent metal cation site.

The protein belongs to the RNase HII family. The cofactor is Mn(2+). Mg(2+) serves as cofactor.

The protein localises to the cytoplasm. It catalyses the reaction Endonucleolytic cleavage to 5'-phosphomonoester.. Functionally, endonuclease that specifically degrades the RNA of RNA-DNA hybrids. The polypeptide is Ribonuclease HII (rnhB) (Chlamydia pneumoniae (Chlamydophila pneumoniae)).